The primary structure comprises 428 residues: MHYLNISFTYKNTDISVREKLAFDSDEKKDQILRLLKSSKNIIECMVLSTCNRVEVLAYTNDIKSAMTHIIRCLTVYSGVFEDELFERADIYEDSGAVHHLFAVASSLDSLVVGETQIVGQLKNAFKFAFDNASSGEHISRLVHYACKCAARVRNETQISKNPISVSSVAVAKAKEIFGTLENKTAVVIGAGEMGELAAKHLITSGANVIIINRSSDHVEELVENLGDKASWDSILKLKEYINKYDLIFSSTSAPHAIITGELIEPQEFRRYFFDIAVPRDIDLVNTDKISVYSVDSLEEMVRRNLALREEQAQTAYSIVGQSTNEFLKFLKDNISIPLIKTIRKKAEICAEAELEKALKKGYLKHSDKEEAAKLIHQVFKAFLHSPTINLKSLASKNDAEQIAGGIKFLFDIKEENLENLTKDIDEI.

Substrate-binding positions include 50 to 53 (TCNR), serine 110, 115 to 117 (ETQ), and glutamine 121. The active-site Nucleophile is cysteine 51. NADP(+) is bound at residue 190–195 (GAGEMG).

The protein belongs to the glutamyl-tRNA reductase family. As to quaternary structure, homodimer.

The catalysed reaction is (S)-4-amino-5-oxopentanoate + tRNA(Glu) + NADP(+) = L-glutamyl-tRNA(Glu) + NADPH + H(+). It participates in porphyrin-containing compound metabolism; protoporphyrin-IX biosynthesis; 5-aminolevulinate from L-glutamyl-tRNA(Glu): step 1/2. In terms of biological role, catalyzes the NADPH-dependent reduction of glutamyl-tRNA(Glu) to glutamate 1-semialdehyde (GSA). The sequence is that of Glutamyl-tRNA reductase from Campylobacter curvus (strain 525.92).